Reading from the N-terminus, the 165-residue chain is Putative ankyrin repeat domain-containing protein 20A5 (165 aa).

3 ANK repeats span residues Gln66–Ile95, Glu99–Leu128, and Tyr132–Ala161.

The sequence is that of Putative ankyrin repeat domain-containing protein 20A5 (ANKRD20A5P) from Homo sapiens (Human).